Reading from the N-terminus, the 60-residue chain is Single-pass membrane and coiled-coil domain-containing protein 4 homolog (60 aa).

The disordered stretch occupies residues 1-23; that stretch reads MRKLRGGQTKETRKQRQERKEEN. Residues 8–23 show a composition bias toward basic and acidic residues; it reads QTKETRKQRQERKEEN. Positions 8–33 form a coiled coil; it reads QTKETRKQRQERKEENLKIQQQMKTI. Residues 31–51 form a helical membrane-spanning segment; sequence KTIVLPTIGVIFLCIVVYVFL.

This sequence belongs to the SMCO4 family.

Its subcellular location is the membrane. In Anopheles gambiae (African malaria mosquito), this protein is Single-pass membrane and coiled-coil domain-containing protein 4 homolog.